The primary structure comprises 359 residues: MVNNRNEIEVRKLEHIFLCSYCNVEYEKTTLLEDIELIHKGTCGINFNDIETEIELFGKKLSAPIIVSGMTGGHSKAKEINKNIAKAVEELGLGMGVGSQRAAIVNDELIDTYSIVRDYTNNLVIGNLGAVNFIVDDWDEEIIDKAIEMIDADAIAIHFNPLQEIIQPEGDLNFKNLYKLKEIISNYKKSYKNIPFIAKQVGEGFSKEDALILKDIGFDAIDVQGSGGTSWAKVEIYRVKEEEIKRLAEKFANWGIPTAASIFEVKSVYDGIVIGSGGIRGGLDIAKCIAIGCDCCSVALPILKASLKGWEEVVKVLESYIKELKIAMFLVGAENIEELKKTSYIVKGTLKEWISQRLK.

11–12 (RK) lines the substrate pocket. Residues Ser-68, 69–71 (GMT), Ser-99, and Asn-127 contribute to the FMN site. Residue 99-101 (SQR) coordinates substrate. Substrate is bound at residue Gln-163. Mg(2+) is bound at residue Glu-164. FMN contacts are provided by residues Lys-199, Thr-229, 278 to 280 (GIR), and 299 to 300 (AL).

The protein belongs to the IPP isomerase type 2 family. In terms of assembly, homooctamer. Dimer of tetramers. FMN is required as a cofactor. Requires NADPH as cofactor. Mg(2+) serves as cofactor.

It localises to the cytoplasm. The enzyme catalyses isopentenyl diphosphate = dimethylallyl diphosphate. With respect to regulation, inhibited by 3,4-epoxy-3-methylbutyl diphosphate (EIPP). In terms of biological role, involved in the biosynthesis of isoprenoids. Catalyzes the 1,3-allylic rearrangement of the homoallylic substrate isopentenyl (IPP) to its allylic isomer, dimethylallyl diphosphate (DMAPP). The chain is Isopentenyl-diphosphate delta-isomerase from Methanocaldococcus jannaschii (strain ATCC 43067 / DSM 2661 / JAL-1 / JCM 10045 / NBRC 100440) (Methanococcus jannaschii).